Reading from the N-terminus, the 433-residue chain is N-lysine methyltransferase SMYD2 (433 aa).

An SET domain is found at 7–241 (GGLERFCSPG…PGEEVFTSYI (235 aa)). An S-adenosyl-L-methionine-binding site is contributed by 17 to 19 (KGR). Zn(2+) is bound by residues C52, C55, C65, C68, C74, C78, H86, and C90. The MYND-type zinc-finger motif lies at 52-90 (CEFCFARKEGLSKCGRCKQAFYCNVECQKEDWPMHKLEC). Residues H137, 206–207 (NH), and 258–260 (YFF) each bind S-adenosyl-L-methionine.

The protein belongs to the class V-like SAM-binding methyltransferase superfamily. In terms of assembly, interacts with RNA polymerase II and HELZ. Interacts with SIN3A and HDAC1. Interacts (via MYND-type zinc finger) with EPB41L3. Interacts (via SET domain) with p53/TP53. Interacts with RB1 and HSP90AA1.

The protein resides in the cytoplasm. Its subcellular location is the cytosol. It localises to the nucleus. The catalysed reaction is L-lysyl(4)-[histone H3] + 3 S-adenosyl-L-methionine = N(6),N(6),N(6)-trimethyl-L-lysyl(4)-[histone H3] + 3 S-adenosyl-L-homocysteine + 3 H(+). It catalyses the reaction L-lysyl-[protein] + S-adenosyl-L-methionine = N(6)-methyl-L-lysyl-[protein] + S-adenosyl-L-homocysteine + H(+). Its function is as follows. Protein-lysine N-methyltransferase that methylates both histones and non-histone proteins, including p53/TP53 and RB1. Specifically trimethylates histone H3 'Lys-4' (H3K4me3) in vivo. The activity requires interaction with HSP90alpha. Shows even higher methyltransferase activity on p53/TP53. Monomethylates 'Lys-370' of p53/TP53, leading to decreased DNA-binding activity and subsequent transcriptional regulation activity of p53/TP53. Monomethylates RB1 at 'Lys-860'. In Sus scrofa (Pig), this protein is N-lysine methyltransferase SMYD2 (SMYD2).